The sequence spans 1040 residues: Exosome RNA helicase MTR4 (1040 aa).

Alanine 2 is modified (N-acetylalanine). Residues 16 to 77 are disordered; it reads DSTSAAGAKK…GTDEPIFGKK (62 aa). Residues 23 to 33 are compositionally biased toward basic and acidic residues; sequence AKKDKEKEKWK. Lysine 24 participates in a covalent cross-link: Glycyl lysine isopeptide (Lys-Gly) (interchain with G-Cter in SUMO2). Serine 38 carries the post-translational modification Phosphoserine. Over residues 41–50 the composition is skewed to basic and acidic residues; sequence KAGKRLDTKL. Residues lysine 49 and lysine 76 each carry the N6-acetyllysine modification. ATP-binding positions include isoleucine 137, 159-166, serine 162, glycine 164, lysine 165, and threonine 166; that span reads AHTSAGKT. The 157-residue stretch at 146–302 folds into the Helicase ATP-binding domain; the sequence is IQCVDNNQSV…WICHLHKQPC (157 aa). The DEIH box signature appears at 250-253; it reads DEIH. A Glycyl lysine isopeptide (Lys-Gly) (interchain with G-Cter in SUMO2) cross-link involves residue lysine 356. The Helicase C-terminal domain occupies 403–575; sequence QMTKLDFNTD…NMVLNLLRVE (173 aa). Residues lysine 682 and lysine 721 each participate in a glycyl lysine isopeptide (Lys-Gly) (interchain with G-Cter in SUMO2) cross-link.

Belongs to the helicase family. SKI2 subfamily. In terms of assembly, component of a TRAMP-like complex, an ATP-dependent exosome regulatory complex consisting of a helicase (MTREX), an oligadenylate polymerase (TENT4B or TENT4A), and a substrate specific RNA-binding factor (ZCCHC7 or ZCCHC8). Several TRAMP-like complexes exist with specific compositions and are associated with nuclear, or nucleolar RNA exosomes. Identified in the spliceosome C complex. Component of the poly(A) tail exosome targeting (PAXT) complex made of PABPN1, ZFC3H1 and MTREX that directs a subset of long and polyadenylated poly(A) RNAs for exosomal degradation. Component of the nuclear exosome targeting (NEXT) complex composed of MTREX, ZCCHC8, and RBM7 that directs a subset of non-coding short-lived RNAs for exosomal degradation. Interacts with ZCCHC8; this interaction bridges the interaction between RBM7 and MTREX. Binds to ZFC3H1 and RBM7 in a RNase-insensitive manner. Interacts with EXOSC10; the interaction mediates the association of MTREX with nuclear RNA exosomes. Interacts with isoform 1 of NVL in an ATP-dependent manner; the interaction is required to associate NVL with nuclear RNA exosome. Interacts with WDR74; the interaction dissociation in a late stage of rRNA synthesis is required for appropriate maturation of pre-60S particles and depends on the ATPase activity of NVL. Interacts with MPHOSPH6. Interacts with the RNA cap-binding complex proteins NCBP1 and SRRT. Interacts with NRDE2; the interaction is direct and negatively regulates MTREX function in exosomal degradation by changing its conformation precluding interaction with ZFC3H1, the RNA cap-binding complex proteins NCBP1 and SRRT, and association with the exosome. Associates with the RNA exosome complex.

It localises to the nucleus. Its subcellular location is the nucleoplasm. The protein localises to the nucleolus. It is found in the nucleus speckle. It carries out the reaction ATP + H2O = ADP + phosphate + H(+). Its activity is regulated as follows. Activated when MTREX is incorporated into NEXT complex an the nuclear RNA exosome complex. In terms of biological role, catalyzes the ATP-dependent unwinding of RNA duplexes with a single-stranded 3' RNA extension. Central subunit of many protein complexes, namely TRAMP-like, nuclear exosome targeting (NEXT) and poly(A) tail exosome targeting (PAXT). NEXT functions as an RNA exosome cofactor that directs a subset of non-coding short-lived RNAs for exosomal degradation. NEXT is involved in surveillance and turnover of aberrant transcripts and non-coding RNAs. PAXT directs a subset of long and polyadenylated poly(A) RNAs for exosomal degradation. The RNA exosome is fundamental for the degradation of RNA in eukaryotic nuclei. Substrate targeting is facilitated by its cofactor ZCCHC8, which links to RNA-binding protein adapters. Associated with the RNA exosome complex and involved in the 3'-processing of the 7S pre-RNA to the mature 5.8S rRNA. May be involved in pre-mRNA splicing. In the context of NEXT complex can also in vitro unwind DNA:RNA heteroduplexes with a 3' poly (A) RNA tracking strand. Can promote unwinding and degradation of structured RNA substrates when associated with the nuclear exosome and its cofactors. Can displace a DNA strand while translocating on RNA to ultimately degrade the RNA within a DNA/RNA heteroduplex. Plays a role in DNA damage response. The protein is Exosome RNA helicase MTR4 of Mus musculus (Mouse).